We begin with the raw amino-acid sequence, 466 residues long: Cysteine--tRNA ligase (466 aa).

Residue cysteine 28 coordinates Zn(2+). A 'HIGH' region motif is present at residues 30-40; the sequence is PTVYNFFHIGN. Residues cysteine 208, histidine 233, and glutamate 237 each contribute to the Zn(2+) site. The 'KMSKS' region signature appears at 265–269; it reads KMSKS. ATP is bound at residue lysine 268.

It belongs to the class-I aminoacyl-tRNA synthetase family. As to quaternary structure, monomer. Zn(2+) serves as cofactor.

Its subcellular location is the cytoplasm. It catalyses the reaction tRNA(Cys) + L-cysteine + ATP = L-cysteinyl-tRNA(Cys) + AMP + diphosphate. This is Cysteine--tRNA ligase from Clostridium perfringens (strain SM101 / Type A).